The sequence spans 82 residues: Small ribosomal subunit protein bS16 (82 aa).

The protein belongs to the bacterial ribosomal protein bS16 family.

This is Small ribosomal subunit protein bS16 from Pectobacterium atrosepticum (strain SCRI 1043 / ATCC BAA-672) (Erwinia carotovora subsp. atroseptica).